The sequence spans 244 residues: MSTSKRKRGDDANWNKRTTKKKPSSAGLKKAGSKAERPSLQIQTLQHAGSTMITVPSGGVCDLINTYARGSDEGNRHTSETLTYKIAVDYHFVADSQACKYSNTGTGVMWLVYDTTPGGQAPTPQTIFAYPDTLKAWPATWKVSRELCHRFVVKRRWLFNMETDGRIGSDIPPSNASWKPCKRNIYFHKFTSGLGVRTQWKNVTDGGVGAIQRGALYMVIAPGNGLTFTAHGQTRLYFKSVGNQ.

The short motif at 1-24 (MSTSKRKRGDDANWNKRTTKKKPS) is the Bipartite nuclear localization signal element. A disordered region spans residues 1-39 (MSTSKRKRGDDANWNKRTTKKKPSSAGLKKAGSKAERPS).

Belongs to the geminiviridae capsid protein family. As to quaternary structure, homomultimer. Interacts with the movement protein. Binds to single-stranded and double-stranded viral DNA.

The protein localises to the virion. It is found in the host nucleus. In terms of biological role, encapsidates the viral genome into characteristic twinned ('geminate') particles. Binds the genomic viral ssDNA and shuttles it into and out of the cell nucleus. Plays a role in protection of the genome from degradation, virus acquisition and transmission by insect vectors, infectivity, and systemic movement. The CP of monopartite geminiviruses is absolutely essential for virus movement. In Maize streak virus genotype B (isolate Tas) (MSV), this protein is Capsid protein.